A 664-amino-acid polypeptide reads, in one-letter code: Methionine--tRNA ligase (664 aa).

The 'HIGH' region motif lies at 15 to 25; the sequence is YYPSGKLHIGH. A 'KMSKS' region motif is present at residues 311–315; sequence KMSKS. Lys314 contacts ATP. Residues 536-556 are disordered; the sequence is MQGSAPAKEETKEEEPQEVDR. In terms of domain architecture, tRNA-binding spans 570–662; sequence LRVAEVIEAE…IDQSLPKGTR (93 aa).

It belongs to the class-I aminoacyl-tRNA synthetase family. MetG type 2B subfamily. As to quaternary structure, homodimer.

It is found in the cytoplasm. It catalyses the reaction tRNA(Met) + L-methionine + ATP = L-methionyl-tRNA(Met) + AMP + diphosphate. Its function is as follows. Is required not only for elongation of protein synthesis but also for the initiation of all mRNA translation through initiator tRNA(fMet) aminoacylation. In Bacillus subtilis (strain 168), this protein is Methionine--tRNA ligase (metG).